Here is a 279-residue protein sequence, read N- to C-terminus: Expansin-A22 (279 aa).

A signal peptide spans 1-27; sequence MKLLEKMIYVEFLMIIMVIWVVPMSYG. One can recognise an Expansin-like EG45 domain in the interval 76-186; the sequence is QGACGYGNLF…RRIPCSKTGG (111 aa). The 80-residue stretch at 196 to 275 folds into the Expansin-like CBD domain; that stretch reads YFLMVLIYNV…NWGFGQTFDG (80 aa).

It belongs to the expansin family. Expansin A subfamily.

Its subcellular location is the secreted. The protein resides in the cell wall. It is found in the membrane. Functionally, causes loosening and extension of plant cell walls by disrupting non-covalent bonding between cellulose microfibrils and matrix glucans. No enzymatic activity has been found. The polypeptide is Expansin-A22 (EXPA22) (Arabidopsis thaliana (Mouse-ear cress)).